A 508-amino-acid polypeptide reads, in one-letter code: Transcriptional regulatory protein moc3 (508 aa).

A disordered region spans residues 15 to 43 (NRTGSINSNPLYIPNPNVEPTPKPTKRRT). The zn(2)-C6 fungal-type DNA-binding region spans 46 to 76 (GCLTCRRRRIKCDETKPFCLNCTKTNRECEG). Disordered regions lie at residues 110–146 (ASSS…STVT) and 174–193 (NHNV…KPSV). The span at 176–193 (NVPTNNSSSATSSTKPSV) shows a compositional bias: low complexity.

In terms of assembly, interacts with zfs1.

It localises to the nucleus. Functionally, induces sexual development and ascus formation. Also involved in calcium homeostasis. The chain is Transcriptional regulatory protein moc3 (moc3) from Schizosaccharomyces pombe (strain 972 / ATCC 24843) (Fission yeast).